The primary structure comprises 100 residues: Small ribosomal subunit protein uS14m (100 aa).

Belongs to the universal ribosomal protein uS14 family.

It localises to the mitochondrion. The polypeptide is Small ribosomal subunit protein uS14m (RPS14) (Brassica napus (Rape)).